Reading from the N-terminus, the 335-residue chain is GTPase Obg (335 aa).

Residues 1–158 form the Obg domain; sequence MFLDQITIEL…RQVELELKLI (158 aa). The 176-residue stretch at 159 to 334 folds into the OBG-type G domain; the sequence is ADIGLVGFPN…LNSLFTNKLA (176 aa). GTP-binding positions include 165-172, 190-194, 215-218, 285-288, and 315-317; these read GFPNAGKS, FTTLQ, DIPG, NKID, and SGL. Mg(2+) contacts are provided by serine 172 and threonine 192.

It belongs to the TRAFAC class OBG-HflX-like GTPase superfamily. OBG GTPase family. Monomer. Mg(2+) serves as cofactor.

The protein resides in the cytoplasm. An essential GTPase (4.1 pmol GTP/min). Cannot substitute endogenous obg in E.coli, has a partially dominant-negative phenotype upon overexpression in liquid culture leading to decreased growth rate in a concentration-dependent fashion, with 50% of cells being elongated. Binds GTP, GDP and possibly (p)ppGpp with moderate affinity, with high nucleotide exchange rates and a fairly low GTP hydrolysis rate. It may play a role in control of the cell cycle, stress response, ribosome biogenesis and in those bacteria that undergo differentiation, in morphogenesis control. The chain is GTPase Obg from Chlamydia abortus (strain DSM 27085 / S26/3) (Chlamydophila abortus).